The sequence spans 319 residues: Guanidinobutyrase (319 aa).

6 residues coordinate Mn(2+): histidine 129, aspartate 152, histidine 154, aspartate 156, aspartate 243, and aspartate 245.

The protein belongs to the arginase family. Agmatinase subfamily. Homohexamer. Mn(2+) is required as a cofactor.

It catalyses the reaction 4-guanidinobutanoate + H2O = urea + 4-aminobutanoate. Catalyzes specifically the hydrolysis of 4-guanidinobutanoate to 4-aminobutanoate and urea. Has no activity against arginine, agmatine, 3-guanidinopropionate and guanidinoacetate. This is Guanidinobutyrase (gbuA) from Pseudomonas aeruginosa (strain ATCC 15692 / DSM 22644 / CIP 104116 / JCM 14847 / LMG 12228 / 1C / PRS 101 / PAO1).